The following is a 379-amino-acid chain: S-adenosylmethionine decarboxylase proenzyme (379 aa).

Residues Glu30 and Glu33 contribute to the active site. Ser96 (schiff-base intermediate with substrate; via pyruvic acid) is an active-site residue. Pyruvic acid (Ser); by autocatalysis is present on Ser96. The active-site Proton donor; for catalytic activity is the Cys110. Catalysis depends on proton acceptor; for processing activity residues Ser254 and His267.

Belongs to the eukaryotic AdoMetDC family. As to quaternary structure, heterotetramer of two alpha and two beta chains. The cofactor is pyruvate. In terms of processing, is synthesized initially as an inactive proenzyme. Formation of the active enzyme involves a self-maturation process in which the active site pyruvoyl group is generated from an internal serine residue via an autocatalytic post-translational modification. Two non-identical subunits are generated from the proenzyme in this reaction, and the pyruvate is formed at the N-terminus of the alpha chain, which is derived from the carboxyl end of the proenzyme. The post-translation cleavage follows an unusual pathway, termed non-hydrolytic serinolysis, in which the side chain hydroxyl group of the serine supplies its oxygen atom to form the C-terminus of the beta chain, while the remainder of the serine residue undergoes an oxidative deamination to produce ammonia and the pyruvoyl group blocking the N-terminus of the alpha chain.

The catalysed reaction is S-adenosyl-L-methionine + H(+) = S-adenosyl 3-(methylsulfanyl)propylamine + CO2. The protein operates within amine and polyamine biosynthesis; S-adenosylmethioninamine biosynthesis; S-adenosylmethioninamine from S-adenosyl-L-methionine: step 1/1. S-adenosylmethionine decarboxylase is essential for the biosynthesis of spermine and spermidine. The alpha subunit contains the active site. The protein is S-adenosylmethionine decarboxylase proenzyme (amd1) of Dictyostelium discoideum (Social amoeba).